The following is a 338-amino-acid chain: Transcription factor AP-4 (338 aa).

The bHLH domain maps to 48–99 (IRREIANSNERRRMQSINAGFQSLKTLIPHTDGEKLSKAAILQQTAEYIFSL). The interval 100-120 (EQEKTRLLQQNTQLKRFIQEL) is leucine-zipper 1. A disordered region spans residues 118 to 141 (QELSGSSPKRRRAEDKDEGIGSPD). 3 positions are modified to phosphoserine: Ser-123, Ser-124, and Ser-139. Lys-147 is covalently cross-linked (Glycyl lysine isopeptide (Lys-Gly) (interchain with G-Cter in SUMO2)). The leucine-zipper 2 stretch occupies residues 151–179 (LRREMIELRQQLDKERSVRMMLEEQVRSL). Glycyl lysine isopeptide (Lys-Gly) (interchain with G-Cter in SUMO2) cross-links involve residues Lys-187, Lys-189, and Lys-285. Residues 283 to 294 (QEKQELEEEQRR) show a composition bias toward basic and acidic residues. The segment at 283–338 (QEKQELEEEQRRAVIVKPVRSCPEAPTSDTASDSEASDSDAMDQSREEPSGDGELP) is disordered.

As to quaternary structure, efficient DNA binding requires dimerization with another bHLH protein. Homodimer.

Its subcellular location is the nucleus. Functionally, transcription factor that activates both viral and cellular genes by binding to the symmetrical DNA sequence 5'-CAGCTG-3'. The protein is Transcription factor AP-4 (TFAP4) of Homo sapiens (Human).